Here is a 473-residue protein sequence, read N- to C-terminus: Cysteine--tRNA ligase (473 aa).

C28 is a binding site for Zn(2+). Positions 30-40 (MTVYDYCHLGH) match the 'HIGH' region motif. Zn(2+) contacts are provided by C209, H234, and E238. The short motif at 282–286 (KMSKS) is the 'KMSKS' region element. Position 285 (K285) interacts with ATP.

The protein belongs to the class-I aminoacyl-tRNA synthetase family. Monomer. The cofactor is Zn(2+).

The protein resides in the cytoplasm. The catalysed reaction is tRNA(Cys) + L-cysteine + ATP = L-cysteinyl-tRNA(Cys) + AMP + diphosphate. This Neisseria meningitidis serogroup B (strain ATCC BAA-335 / MC58) protein is Cysteine--tRNA ligase.